The chain runs to 312 residues: MERVNETVVREVIFLGFSSLARLQQLLFVIFLLLYLFTLGTNAIIISTIVLDRALHIPMYFFLAILSCSEICYTFIIVPKMLVDLLSQKKTISFLGCAIQMFSFLFLGCSHSFLLAVMGYDRYIAICNPLRYSVLMGHGVCMGLVAAACACGFTVAQIITSLVFHLPFYSSNQLHHFFCDIAPVLKLASHHNHFSQIVIFMLCTLVLAIPLLLILVSYVHILSAILQFPSTLGRCKAFSTCVSHLIIVTVHYGCASFIYLRPQSNYSSSQDALISVSYTIITPLFNPMIYSLRNKEFKSALCKIVRRTISLL.

Topologically, residues 1–25 (MERVNETVVREVIFLGFSSLARLQQ) are extracellular. N-linked (GlcNAc...) asparagine glycosylation is present at Asn-5. The helical transmembrane segment at 26–46 (LLFVIFLLLYLFTLGTNAIII) threads the bilayer. The Cytoplasmic segment spans residues 47–54 (STIVLDRA). Residues 55 to 75 (LHIPMYFFLAILSCSEICYTF) form a helical membrane-spanning segment. The Extracellular segment spans residues 76–99 (IIVPKMLVDLLSQKKTISFLGCAI). Residues 100–120 (QMFSFLFLGCSHSFLLAVMGY) form a helical membrane-spanning segment. Residues 121 to 139 (DRYIAICNPLRYSVLMGHG) are Cytoplasmic-facing. Residues 140–160 (VCMGLVAAACACGFTVAQIIT) form a helical membrane-spanning segment. Residues 161-197 (SLVFHLPFYSSNQLHHFFCDIAPVLKLASHHNHFSQI) are Extracellular-facing. The chain crosses the membrane as a helical span at residues 198–217 (VIFMLCTLVLAIPLLLILVS). Residues 218-237 (YVHILSAILQFPSTLGRCKA) lie on the Cytoplasmic side of the membrane. The helical transmembrane segment at 238–258 (FSTCVSHLIIVTVHYGCASFI) threads the bilayer. Over 259 to 271 (YLRPQSNYSSSQD) the chain is Extracellular. A glycan (N-linked (GlcNAc...) asparagine) is linked at Asn-265. Residues 272–292 (ALISVSYTIITPLFNPMIYSL) form a helical membrane-spanning segment. Residues 293-312 (RNKEFKSALCKIVRRTISLL) lie on the Cytoplasmic side of the membrane.

Belongs to the G-protein coupled receptor 1 family.

Its subcellular location is the cell membrane. Functionally, odorant receptor. The chain is Olfactory receptor 10K2 (OR10K2) from Homo sapiens (Human).